We begin with the raw amino-acid sequence, 464 residues long: Endo-1,4-beta-xylanase A (464 aa).

Positions 1–33 (MFRHHPTRGRRTAGLLAAALATLSAGLTAVAPA) are cleaved as a signal peptide. A GH10 domain is found at 40–349 (TATLGELAEA…KPAYHAIAAA (310 aa)). Glutamate 166 acts as the Proton donor in catalysis. Glutamate 271 (nucleophile) is an active-site residue. A CBM2 domain is found at 354–457 (SPAPGGNCTA…TPADVTCTPG (104 aa)).

It belongs to the glycosyl hydrolase 10 (cellulase F) family. The cofactor is Does not require any standard metal (Mg(2+), Mn2(+), Ca(2+))..

The catalysed reaction is Endohydrolysis of (1-&gt;4)-beta-D-xylosidic linkages in xylans.. The protein operates within glycan degradation; xylan degradation. Completely inhibited by Hg(2+), unaffected by EDTA. Its function is as follows. Contributes to hydrolysis of hemicellulose, the major component of plant cell-walls. Hydrolyzes xylan to xylose and xylobiose. The chain is Endo-1,4-beta-xylanase A (xynAS9) from Streptomyces sp.